An 85-amino-acid chain; its full sequence is Scratcher peptide (85 aa).

The signal sequence occupies residues 1-24 (MTSVQSVTCCCLLWLMLSVQPITP). Positions 25-38 (GSPGPAQLSRERSF) are excised as a propeptide. Glutamate 47 is modified (4-carboxyglutamate). Aspartate 67 bears the Aspartic acid 1-amide mark. A propeptide spanning residues 68–85 (KRDVVSPRIRRRKRSKAM) is cleaved from the precursor.

The protein belongs to the conotoxin J superfamily. In terms of processing, contains 2 disulfide bonds. In terms of tissue distribution, expressed by the venom duct.

The protein resides in the secreted. In terms of biological role, causes scratching in mice. The protein is Scratcher peptide of Conus geographus (Geography cone).